A 196-amino-acid polypeptide reads, in one-letter code: Oocyte zinc finger protein XlCOF26 (196 aa).

C2H2-type zinc fingers lie at residues 6–28 (YSCTDCGRSFYAKGHLLNHQKNH), 34–56 (FTCTECGKIFTRKSNLRKHQRIH), 62–84 (FTCTECGKRFTEKRNLLIHQRIH), 90–112 (FTCTECGKSFNLWSTLRNHHKIH), 118–140 (FTCPECGKKFSVKNSLRKHQRTH), 146–168 (FTCTECGKTFTKKSTFHMHQSTH), and 174–196 (FTCTECGKSFAKNGNLRIHQMTH).

The protein belongs to the krueppel C2H2-type zinc-finger protein family.

It is found in the nucleus. May be involved in transcriptional regulation. The protein is Oocyte zinc finger protein XlCOF26 of Xenopus laevis (African clawed frog).